The primary structure comprises 351 residues: Uroporphyrinogen decarboxylase (351 aa).

Substrate-binding positions include 27 to 31 (RQAGR), Asp-77, Tyr-154, Thr-209, and His-327.

It belongs to the uroporphyrinogen decarboxylase family. As to quaternary structure, homodimer.

The protein resides in the cytoplasm. It carries out the reaction uroporphyrinogen III + 4 H(+) = coproporphyrinogen III + 4 CO2. Its pathway is porphyrin-containing compound metabolism; protoporphyrin-IX biosynthesis; coproporphyrinogen-III from 5-aminolevulinate: step 4/4. Catalyzes the decarboxylation of four acetate groups of uroporphyrinogen-III to yield coproporphyrinogen-III. This is Uroporphyrinogen decarboxylase from Thioalkalivibrio sulfidiphilus (strain HL-EbGR7).